The sequence spans 268 residues: Ribosomal RNA small subunit methyltransferase A (268 aa).

S-adenosyl-L-methionine-binding residues include asparagine 18, leucine 20, glycine 45, glutamate 66, aspartate 91, and asparagine 112.

It belongs to the class I-like SAM-binding methyltransferase superfamily. rRNA adenine N(6)-methyltransferase family. RsmA subfamily.

Its subcellular location is the cytoplasm. It carries out the reaction adenosine(1518)/adenosine(1519) in 16S rRNA + 4 S-adenosyl-L-methionine = N(6)-dimethyladenosine(1518)/N(6)-dimethyladenosine(1519) in 16S rRNA + 4 S-adenosyl-L-homocysteine + 4 H(+). Functionally, specifically dimethylates two adjacent adenosines (A1518 and A1519) in the loop of a conserved hairpin near the 3'-end of 16S rRNA in the 30S particle. May play a critical role in biogenesis of 30S subunits. The protein is Ribosomal RNA small subunit methyltransferase A of Vibrio vulnificus (strain CMCP6).